We begin with the raw amino-acid sequence, 376 residues long: Putative glutamate--cysteine ligase 2-3 (376 aa).

Belongs to the glutamate--cysteine ligase type 2 family. YbdK subfamily.

The enzyme catalyses L-cysteine + L-glutamate + ATP = gamma-L-glutamyl-L-cysteine + ADP + phosphate + H(+). ATP-dependent carboxylate-amine ligase which exhibits weak glutamate--cysteine ligase activity. The protein is Putative glutamate--cysteine ligase 2-3 of Nocardioides sp. (strain ATCC BAA-499 / JS614).